The sequence spans 472 residues: Glutamate--tRNA ligase 2 (472 aa).

Residues 12-22 (PSPSGLLHLGN) carry the 'HIGH' region motif. Positions 253 to 257 (PLSKR) match the 'KMSKS' region motif. Lysine 256 serves as a coordination point for ATP.

This sequence belongs to the class-I aminoacyl-tRNA synthetase family. Glutamate--tRNA ligase type 1 subfamily. As to quaternary structure, monomer.

It localises to the cytoplasm. The enzyme catalyses tRNA(Glu) + L-glutamate + ATP = L-glutamyl-tRNA(Glu) + AMP + diphosphate. Its function is as follows. Catalyzes the attachment of glutamate to tRNA(Glu) in a two-step reaction: glutamate is first activated by ATP to form Glu-AMP and then transferred to the acceptor end of tRNA(Glu). This Nitrosococcus oceani (strain ATCC 19707 / BCRC 17464 / JCM 30415 / NCIMB 11848 / C-107) protein is Glutamate--tRNA ligase 2.